Consider the following 142-residue polypeptide: MAP3K7 C-terminal-like protein (142 aa).

Detected in lung and peripheral blood leukocytes. Expressed predominantly in peripheral blood leukocytes and ubiquitously in adult and fetal tissues. Also expressed strongly in breast carcinoma GI-101, colon adenocarcinoma GI-112, and prostatic adenocarcinoma PC3.

This Homo sapiens (Human) protein is MAP3K7 C-terminal-like protein (MAP3K7CL).